Here is a 120-residue protein sequence, read N- to C-terminus: MLSARNRMRRSTEFDATVRQGVRTVQPDVIVHVRRAKECAADSSPRVGLIIAKSVGTAVERHRVARRLRHVARPMLMNLHPCDRVVIRALPSSRHVSSAWLEQQLRSGLRRAFESAGADR.

Belongs to the RnpA family. In terms of assembly, consists of a catalytic RNA component (M1 or rnpB) and a protein subunit.

It carries out the reaction Endonucleolytic cleavage of RNA, removing 5'-extranucleotides from tRNA precursor.. RNaseP catalyzes the removal of the 5'-leader sequence from pre-tRNA to produce the mature 5'-terminus. It can also cleave other RNA substrates such as 4.5S RNA. The protein component plays an auxiliary but essential role in vivo by binding to the 5'-leader sequence and broadening the substrate specificity of the ribozyme. The protein is Ribonuclease P protein component of Mycobacterium marinum (strain ATCC BAA-535 / M).